A 362-amino-acid polypeptide reads, in one-letter code: Histidinol-phosphate aminotransferase (362 aa).

Lysine 218 carries the N6-(pyridoxal phosphate)lysine modification.

The protein belongs to the class-II pyridoxal-phosphate-dependent aminotransferase family. Histidinol-phosphate aminotransferase subfamily. As to quaternary structure, homodimer. Pyridoxal 5'-phosphate is required as a cofactor.

It carries out the reaction L-histidinol phosphate + 2-oxoglutarate = 3-(imidazol-4-yl)-2-oxopropyl phosphate + L-glutamate. The protein operates within amino-acid biosynthesis; L-histidine biosynthesis; L-histidine from 5-phospho-alpha-D-ribose 1-diphosphate: step 7/9. This Xanthomonas campestris pv. campestris (strain 8004) protein is Histidinol-phosphate aminotransferase.